A 159-amino-acid polypeptide reads, in one-letter code: Type-1 angiotensin II receptor-associated protein (159 aa).

The Extracellular segment spans residues 1–23 (MELPAVNLKVILLGHWLLTTWGC). Residues 24–44 (IVFSGSYAWANFTILALGVWA) form a helical membrane-spanning segment. The Cytoplasmic portion of the chain corresponds to 45–55 (VAQRDSIDAIS). The helical transmembrane segment at 56–76 (MFLGGLLATIFLDIVHISIFY) threads the bilayer. Residues 77–86 (PRVSLTDTGR) are Extracellular-facing. Residues 87 to 107 (FGVGMAILSLLLKPLSCCFVY) form a helical membrane-spanning segment. Topologically, residues 108–159 (HMYRERGGELLVHTGFLGSSQDRSAYQTIDSAEAPADPFAVPEGRSQDARGY) are cytoplasmic. The interaction with AGTR1 stretch occupies residues 110–122 (YRERGGELLVHTG). 2 positions are modified to phosphoserine: Ser126 and Ser127. Residue Thr135 is modified to Phosphothreonine. Ser138 and Ser153 each carry phosphoserine. The interval 140 to 159 (EAPADPFAVPEGRSQDARGY) is disordered.

Interacts with RACK1, and with the C-terminal region of AGTR1. Ubiquitous but more abundant in kidney, heart, pancreas and thyroid.

Its subcellular location is the endoplasmic reticulum membrane. The protein localises to the golgi apparatus membrane. It localises to the cytoplasmic vesicle membrane. Appears to be a negative regulator of type-1 angiotensin II receptor-mediated signaling by regulating receptor internalization as well as mechanism of receptor desensitization such as phosphorylation. Also induces a decrease in cell proliferation and angiotensin II-stimulated transcriptional activity. This Homo sapiens (Human) protein is Type-1 angiotensin II receptor-associated protein (AGTRAP).